Reading from the N-terminus, the 975-residue chain is Probable ATP-dependent RNA helicase CG8611 (975 aa).

Residues 1–24 (MVENISLNVTVKSSARKNQQQSPA) are compositionally biased toward polar residues. Disordered regions lie at residues 1–38 (MVEN…QDFD), 50–104 (AIVV…DDLM), and 127–295 (TTKP…FRTK). Positions 64–94 (PTNSSVPNTTKSPTPSVSSSKSAISTLSASP) are enriched in low complexity. Phosphoserine is present on residues Ser-75 and Ser-99. Over residues 190 to 203 (QLEEERRQKRREEG) the composition is skewed to basic and acidic residues. Phosphoserine is present on residues Ser-210, Ser-220, and Ser-224. Over residues 242–261 (IEDSGESGEESATSDEEPDE) the composition is skewed to acidic residues. Residues 269–285 (QEKEPKQTAKKPPKAEE) are compositionally biased toward basic and acidic residues. The short motif at 327 to 356 (SKISTLGLHPHAVKNLEDLLSIRELTSVQQ) is the Q motif element. Residues 359 to 548 (IPEVLQGKDV…GLTLKNPLYI (190 aa)) form the Helicase ATP-binding domain. 372–379 (SQTGSGKT) contacts ATP. A DEAD box motif is present at residues 485-488 (DEAD). One can recognise a Helicase C-terminal domain in the interval 616-789 (LLAKEVDASP…DMYAYLQTLL (174 aa)). A Phosphoserine modification is found at Ser-667. Disordered stretches follow at residues 915 to 942 (LQQR…VGRS) and 955 to 975 (NMSE…RKQA).

This sequence belongs to the DEAD box helicase family. DDX31/DBP7 subfamily.

It catalyses the reaction ATP + H2O = ADP + phosphate + H(+). In terms of biological role, probable ATP-dependent RNA helicase. This is Probable ATP-dependent RNA helicase CG8611 from Drosophila melanogaster (Fruit fly).